Reading from the N-terminus, the 479-residue chain is Zinc finger and SCAN domain-containing protein 26 (479 aa).

A Glycyl lysine isopeptide (Lys-Gly) (interchain with G-Cter in SUMO2) cross-link involves residue Lys17. Positions Cys51–Leu133 constitute an SCAN box domain. Positions Thr155–Asn187 are disordered. Residues Gln174–Asn187 show a composition bias toward basic and acidic residues. The C2H2-type 1; degenerate zinc finger occupies Cys232 to His254. 7 C2H2-type zinc fingers span residues His283 to His305, Tyr311 to His333, Tyr339 to His361, Cys367 to His389, His395 to His417, Phe423 to His445, and Tyr451 to His473.

It localises to the nucleus. Functionally, may be involved in transcriptional regulation. The chain is Zinc finger and SCAN domain-containing protein 26 (ZSCAN26) from Bos taurus (Bovine).